The primary structure comprises 455 residues: MHQRALLFSAFWTAVQAQQAGTLTAETHPSLTWQKCAAGGTCTEQKGSVVLDSNWRWLHSVDGSTNCYTGNTWDATLCPDNESCASNCALDGADYEGTYGVTTSGDALTLQFVTGANIGSRLYLMADDDESYQTFNLLNNEFTFDVDASKLPCGLNGAVYFVSMDADGGVAKYSTNKAGAKYGTGYCDSQCPRDLKFINGQANVEGWEPSDSDKNAGVGGHGSCCPEMDIWEANSISTAYTPHPCDDTAQTMCEGDTCGGTYSSERYAGTCDPDGCDFNAYRMGNESFYGPSKLVDSSSPVTVVTQFITADGTDSGALSEIKRFYVQGGKVIANAASNVDGVTGNSITADFCTAQKKAFGDDDIFAQHGGLQGMGNALSSMVLTLSIWDDHHSSMMWLDSSYPEDADATAPGVARGTCEPHAGDPEKVESQSGSATVTYSNIKYGPIGSTFDAPA.

An N-terminal signal peptide occupies residues 1 to 17 (MHQRALLFSAFWTAVQA). N81 carries an N-linked (GlcNAc...) asparagine glycan. The active-site Nucleophile is the E227. E232 functions as the Proton donor in the catalytic mechanism. The N-linked (GlcNAc...) asparagine glycan is linked to N285.

Belongs to the glycosyl hydrolase 7 (cellulase C) family.

The protein resides in the secreted. The catalysed reaction is Hydrolysis of (1-&gt;4)-beta-D-glucosidic linkages in cellulose and cellotetraose, releasing cellobiose from the non-reducing ends of the chains.. Its function is as follows. The biological conversion of cellulose to glucose generally requires three types of hydrolytic enzymes: (1) Endoglucanases which cut internal beta-1,4-glucosidic bonds; (2) Exocellobiohydrolases that cut the disaccharide cellobiose from the non-reducing end of the cellulose polymer chain; (3) Beta-1,4-glucosidases which hydrolyze the cellobiose and other short cello-oligosaccharides to glucose. The polypeptide is Probable 1,4-beta-D-glucan cellobiohydrolase A (cbhA) (Aspergillus flavus (strain ATCC 200026 / FGSC A1120 / IAM 13836 / NRRL 3357 / JCM 12722 / SRRC 167)).